Reading from the N-terminus, the 393-residue chain is Sugar efflux transporter A (393 aa).

The next 12 membrane-spanning stretches (helical) occupy residues 22–42, 51–71, 82–102, 107–127, 152–172, 174–194, 219–239, 253–273, 287–307, 308–328, 344–364, and 366–386; these read VIAF…SLFL, FMVG…SQIL, KTLI…YAWN, VLLF…PQLF, ISLS…GFGF, AMYL…WLLL, LLLF…LINM, LAGV…LLAG, LAVI…GSWA, LLAL…MGML, LFTN…GIVA, and VWSY…AAVC.

Belongs to the major facilitator superfamily. Set transporter family.

It is found in the cell inner membrane. Its function is as follows. Involved in the efflux of sugars. The physiological role may be the reduction of the intracellular concentration of toxic sugars or sugar metabolites. Transports IPTG, lactose and arabinose. The polypeptide is Sugar efflux transporter A (sotA) (Dickeya chrysanthemi (Pectobacterium chrysanthemi)).